Consider the following 310-residue polypeptide: Malate dehydrogenase (310 aa).

NAD(+) is bound by residues 7-12 (GAGNVG) and Asp-32. Arg-81 and Arg-87 together coordinate substrate. NAD(+) is bound by residues Asn-94 and 117–119 (VSN). Substrate is bound by residues Asn-119 and Arg-150. His-174 serves as the catalytic Proton acceptor.

This sequence belongs to the LDH/MDH superfamily. MDH type 3 family. Homotetramer; arranged as a dimer of dimers.

The catalysed reaction is (S)-malate + NAD(+) = oxaloacetate + NADH + H(+). Catalyzes the reversible oxidation of malate to oxaloacetate. The chain is Malate dehydrogenase from Chlorobaculum tepidum (strain ATCC 49652 / DSM 12025 / NBRC 103806 / TLS) (Chlorobium tepidum).